Reading from the N-terminus, the 335-residue chain is Nucleoid-associated protein YejK (335 aa).

This sequence belongs to the YejK family.

The protein localises to the cytoplasm. Its subcellular location is the nucleoid. The chain is Nucleoid-associated protein YejK from Shigella sonnei (strain Ss046).